Consider the following 1217-residue polypeptide: DNA-directed RNA polymerase subunit beta' (1217 aa).

4 residues coordinate Zn(2+): cysteine 60, cysteine 62, cysteine 75, and cysteine 78. The Mg(2+) site is built by aspartate 449, aspartate 451, and aspartate 453. Zn(2+) is bound by residues cysteine 821, cysteine 895, cysteine 902, and cysteine 905.

It belongs to the RNA polymerase beta' chain family. The RNAP catalytic core consists of 2 alpha, 1 beta, 1 beta' and 1 omega subunit. When a sigma factor is associated with the core the holoenzyme is formed, which can initiate transcription. It depends on Mg(2+) as a cofactor. The cofactor is Zn(2+).

It catalyses the reaction RNA(n) + a ribonucleoside 5'-triphosphate = RNA(n+1) + diphosphate. Its function is as follows. DNA-dependent RNA polymerase catalyzes the transcription of DNA into RNA using the four ribonucleoside triphosphates as substrates. The sequence is that of DNA-directed RNA polymerase subunit beta' from Lactobacillus helveticus (strain DPC 4571).